The following is a 179-amino-acid chain: Adenine phosphoribosyltransferase (179 aa).

The protein belongs to the purine/pyrimidine phosphoribosyltransferase family. As to quaternary structure, homodimer.

The protein resides in the cytoplasm. The enzyme catalyses AMP + diphosphate = 5-phospho-alpha-D-ribose 1-diphosphate + adenine. It participates in purine metabolism; AMP biosynthesis via salvage pathway; AMP from adenine: step 1/1. Its function is as follows. Catalyzes a salvage reaction resulting in the formation of AMP, that is energically less costly than de novo synthesis. The polypeptide is Adenine phosphoribosyltransferase (Helicobacter acinonychis (strain Sheeba)).